Consider the following 248-residue polypeptide: MNVLISNDDGYLAEGIAILARVASEFANVRVVAPERDRSGVSNSVTLDRPLQLKQAQNGFYYVNGTPTDCIHVGQFALPDFKPDVVFSGINRGANMGDDTLYSGTVAAATEAYLMGMPAVAFSLNDASGRYWATAEKALWTLLAHFFKKPPSAPVLWNVNIPAVAPEDVRGIKITRLGRRHHEQNIVPSRNPRGEQIYWIGPVGEVSDREEGTDFGECGAGFITVTPLQIDLTAYPDMAETAAFWHTD.

A divalent metal cation contacts are provided by D8, D9, S39, and N91.

This sequence belongs to the SurE nucleotidase family. A divalent metal cation is required as a cofactor.

Its subcellular location is the cytoplasm. The enzyme catalyses a ribonucleoside 5'-phosphate + H2O = a ribonucleoside + phosphate. In terms of biological role, nucleotidase that shows phosphatase activity on nucleoside 5'-monophosphates. The chain is 5'-nucleotidase SurE from Neisseria gonorrhoeae (strain ATCC 700825 / FA 1090).